A 333-amino-acid chain; its full sequence is Ferredoxin--NADP reductase (333 aa).

Residues D32, Q40, Y45, A85, F119, D285, and T326 each contribute to the FAD site.

The protein belongs to the ferredoxin--NADP reductase type 2 family. In terms of assembly, homodimer. Requires FAD as cofactor.

It carries out the reaction 2 reduced [2Fe-2S]-[ferredoxin] + NADP(+) + H(+) = 2 oxidized [2Fe-2S]-[ferredoxin] + NADPH. The protein is Ferredoxin--NADP reductase of Neorickettsia sennetsu (strain ATCC VR-367 / Miyayama) (Ehrlichia sennetsu).